Here is a 95-residue protein sequence, read N- to C-terminus: Large ribosomal subunit protein uL23 (95 aa).

The protein belongs to the universal ribosomal protein uL23 family. Part of the 50S ribosomal subunit. Contacts protein L29, and trigger factor when it is bound to the ribosome.

Functionally, one of the early assembly proteins it binds 23S rRNA. One of the proteins that surrounds the polypeptide exit tunnel on the outside of the ribosome. Forms the main docking site for trigger factor binding to the ribosome. The protein is Large ribosomal subunit protein uL23 of Solibacter usitatus (strain Ellin6076).